Here is a 183-residue protein sequence, read N- to C-terminus: Large ribosomal subunit protein uL6 (183 aa).

The protein belongs to the universal ribosomal protein uL6 family. In terms of assembly, part of the 50S ribosomal subunit.

This protein binds to the 23S rRNA, and is important in its secondary structure. It is located near the subunit interface in the base of the L7/L12 stalk, and near the tRNA binding site of the peptidyltransferase center. The protein is Large ribosomal subunit protein uL6 of Chlamydia felis (strain Fe/C-56) (Chlamydophila felis).